Here is a 114-residue protein sequence, read N- to C-terminus: Hydrogenase maturation factor HypA (114 aa).

Ni(2+) is bound at residue histidine 2. Zn(2+) contacts are provided by cysteine 73, cysteine 76, cysteine 90, and cysteine 93.

This sequence belongs to the HypA/HybF family.

Involved in the maturation of [NiFe] hydrogenases. Required for nickel insertion into the metal center of the hydrogenase. The sequence is that of Hydrogenase maturation factor HypA from Chloroflexus aggregans (strain MD-66 / DSM 9485).